The following is a 164-amino-acid chain: MNPRRKKRLTLAVALIGGVAAIASLLLYALNSNLNLFFTPTEIVQGKKDTGVMPEIGQRIRVGGMVTIGSMVRDPDSLHVEFAVHDAAGGEIIVTYDDLLPDLFREGQGIVAQGVLSAPGKLEATEVLAKHDENYMPPEVAEAMGQSHEKLDYSEDQSKAGGYK.

Residues 1–8 (MNPRRKKR) are Cytoplasmic-facing. The helical; Signal-anchor for type II membrane protein transmembrane segment at 9 to 29 (LTLAVALIGGVAAIASLLLYA) threads the bilayer. At 30–164 (LNSNLNLFFT…EDQSKAGGYK (135 aa)) the chain is on the periplasmic side. Heme-binding residues include H131 and Y135. The segment at 140–164 (VAEAMGQSHEKLDYSEDQSKAGGYK) is disordered. The segment covering 147-158 (SHEKLDYSEDQS) has biased composition (basic and acidic residues).

This sequence belongs to the CcmE/CycJ family.

It is found in the cell inner membrane. In terms of biological role, heme chaperone required for the biogenesis of c-type cytochromes. Transiently binds heme delivered by CcmC and transfers the heme to apo-cytochromes in a process facilitated by CcmF and CcmH. The polypeptide is Cytochrome c-type biogenesis protein CcmE (Shewanella piezotolerans (strain WP3 / JCM 13877)).